The chain runs to 202 residues: Glycerol-3-phosphate acyltransferase (202 aa).

A run of 6 helical transmembrane segments spans residues N3 to A23, I61 to L81, L87 to F107, G118 to I138, I144 to N164, and L167 to L187.

The protein belongs to the PlsY family. Probably interacts with PlsX.

The protein localises to the cell inner membrane. The enzyme catalyses an acyl phosphate + sn-glycerol 3-phosphate = a 1-acyl-sn-glycero-3-phosphate + phosphate. It participates in lipid metabolism; phospholipid metabolism. In terms of biological role, catalyzes the transfer of an acyl group from acyl-phosphate (acyl-PO(4)) to glycerol-3-phosphate (G3P) to form lysophosphatidic acid (LPA). This enzyme utilizes acyl-phosphate as fatty acyl donor, but not acyl-CoA or acyl-ACP. The protein is Glycerol-3-phosphate acyltransferase of Campylobacter jejuni subsp. jejuni serotype O:6 (strain 81116 / NCTC 11828).